The primary structure comprises 428 residues: Patatin-like protein 3 (428 aa).

The region spanning 38–252 is the PNPLA domain; the sequence is LSIDGGGIRG…AANNPTLCAI (215 aa). The GXGXXG signature appears at 42–47; sequence GGGIRG. The GXSXG motif lies at 80–84; it reads GTSTG. Serine 82 serves as the catalytic Nucleophile. Aspartate 239 acts as the Proton acceptor in catalysis. Positions 239-241 match the DGA/G motif; that stretch reads DGG. Serine 423 carries the phosphoserine modification.

Belongs to the patatin family. As to expression, expressed specifically in the stigma, ovary and funiculus of the ovary.

The protein resides in the cytoplasm. Its function is as follows. Possesses non-specific lipolytic acyl hydrolase (LAH) activity. Catalyzes the hydrolysis of the neutral lipids monogalactosyldiacylglycerol (MGDG), digalactosyldiacylglycerol (DGDG) and phosphatidylglycerol (PG), and less efficiently the polar lipids phosphatidylcholine (PC) and phosphatidylinositol (PI), but not the storage lipid triacylglycerol (TAG). May play a role in root development. The chain is Patatin-like protein 3 (PLP3) from Arabidopsis thaliana (Mouse-ear cress).